A 302-amino-acid polypeptide reads, in one-letter code: N-acetylmuramic acid 6-phosphate etherase (302 aa).

One can recognise an SIS domain in the interval Ile-58–Lys-221. Glu-86 (proton donor) is an active-site residue. Glu-117 is a catalytic residue.

This sequence belongs to the GCKR-like family. MurNAc-6-P etherase subfamily. In terms of assembly, homodimer.

The enzyme catalyses N-acetyl-D-muramate 6-phosphate + H2O = N-acetyl-D-glucosamine 6-phosphate + (R)-lactate. Its pathway is amino-sugar metabolism; N-acetylmuramate degradation. In terms of biological role, specifically catalyzes the cleavage of the D-lactyl ether substituent of MurNAc 6-phosphate, producing GlcNAc 6-phosphate and D-lactate. The protein is N-acetylmuramic acid 6-phosphate etherase of Mycoplasma mycoides subsp. mycoides SC (strain CCUG 32753 / NCTC 10114 / PG1).